The following is a 95-amino-acid chain: Exodeoxyribonuclease 7 small subunit (95 aa).

A compositionally biased stretch (basic and acidic residues) spans 62 to 83; sequence LTKDESKKTNKTGFRGESKTTE. The segment at 62–95 is disordered; sequence LTKDESKKTNKTGFRGESKTTETKNNTAQEEDLF.

This sequence belongs to the XseB family. As to quaternary structure, heterooligomer composed of large and small subunits.

It localises to the cytoplasm. The catalysed reaction is Exonucleolytic cleavage in either 5'- to 3'- or 3'- to 5'-direction to yield nucleoside 5'-phosphates.. Bidirectionally degrades single-stranded DNA into large acid-insoluble oligonucleotides, which are then degraded further into small acid-soluble oligonucleotides. This chain is Exodeoxyribonuclease 7 small subunit, found in Leptospira interrogans serogroup Icterohaemorrhagiae serovar copenhageni (strain Fiocruz L1-130).